A 412-amino-acid chain; its full sequence is Aspartate aminotransferase, cytoplasmic (412 aa).

Ala2 bears the N-acetylalanine mark. L-aspartate is bound by residues Gly38, Trp140, and Asn194. Lys258 is subject to N6-(pyridoxal phosphate)lysine. An L-aspartate-binding site is contributed by Arg386.

This sequence belongs to the class-I pyridoxal-phosphate-dependent aminotransferase family. In terms of assembly, homodimer. Pyridoxal 5'-phosphate is required as a cofactor.

The protein localises to the cytoplasm. The catalysed reaction is L-aspartate + 2-oxoglutarate = oxaloacetate + L-glutamate. It catalyses the reaction L-cysteine + 2-oxoglutarate = 2-oxo-3-sulfanylpropanoate + L-glutamate. The enzyme catalyses (2S)-2-aminobutanoate + 2-oxoglutarate = 2-oxobutanoate + L-glutamate. It carries out the reaction 3-sulfino-L-alanine + 2-oxoglutarate = 3-sulfinopyruvate + L-glutamate. Functionally, biosynthesis of L-glutamate from L-aspartate or L-cysteine. Important regulator of levels of glutamate, the major excitatory neurotransmitter of the vertebrate central nervous system. Acts as a scavenger of glutamate in brain neuroprotection. The aspartate aminotransferase activity is involved in hepatic glucose synthesis during development and in adipocyte glyceroneogenesis. Using L-cysteine as substrate, regulates levels of mercaptopyruvate, an important source of hydrogen sulfide. Mercaptopyruvate is converted into H(2)S via the action of 3-mercaptopyruvate sulfurtransferase (3MST). Hydrogen sulfide is an important synaptic modulator and neuroprotectant in the brain. The chain is Aspartate aminotransferase, cytoplasmic from Gallus gallus (Chicken).